Here is a 387-residue protein sequence, read N- to C-terminus: Protein phosphatase 2C 50 (387 aa).

In terms of domain architecture, PPM-type phosphatase spans 60–377; it reads VWGCASTRGR…DNITVIVVDL (318 aa). Positions 118 and 119 each coordinate Mn(2+). The Modulates binding affinity to PYR/PYL/RCAR abscisic acid intracellular receptors signature appears at 264-268; it reads VSGIL. Aspartate 306 and aspartate 368 together coordinate Mn(2+).

Belongs to the PP2C family. Interacts with PYL3, PYL5, PYL9 and PYL10. Binding to PYL3, PYL5, PYL9 and PYL10 is dependent on the presence of abscisic acid (ABA). Interacts with SAPK10. Requires Mg(2+) as cofactor. Mn(2+) is required as a cofactor.

The enzyme catalyses O-phospho-L-seryl-[protein] + H2O = L-seryl-[protein] + phosphate. It catalyses the reaction O-phospho-L-threonyl-[protein] + H2O = L-threonyl-[protein] + phosphate. Functionally, protein phosphatase involved in abscisic acid (ABA) signaling. Together with PYL3 and SAPK10, may form an ABA signaling module involved in stress response. This Oryza sativa subsp. japonica (Rice) protein is Protein phosphatase 2C 50.